We begin with the raw amino-acid sequence, 964 residues long: Probable LRR receptor-like serine/threonine-protein kinase IRK (964 aa).

Positions 1–20 (MYKALIFTVLLVSAVAPVRS) are cleaved as a signal peptide. The Extracellular segment spans residues 21-603 (LDPPLNDDVL…GHKRILLSIS (583 aa)). LRR repeat units follow at residues 92-116 (LQFL…MLLS), 117-141 (LVNL…FFRQ), 143-166 (GSLR…ISSC), 168-190 (SLAA…IWSL), 191-214 (NTLR…IDRL), 215-238 (NNLR…IGSC), 240-261 (LLKT…TFQQ), 263-286 (SLCY…IGEM), 287-310 (RSLE…IGNL), 312-334 (ALKV…TANC), and 335-358 (INLL…LFQD). A glycan (N-linked (GlcNAc...) asparagine) is linked at Asn-104. N-linked (GlcNAc...) asparagine glycosylation occurs at Asn-173. Asn-317 carries an N-linked (GlcNAc...) asparagine glycan. Residue Asn-370 is glycosylated (N-linked (GlcNAc...) asparagine). 7 LRR repeats span residues 375-399 (IKKI…LGDL), 400-423 (RDLE…IGEL), 425-447 (HLSV…TGGA), 448-471 (VSLE…IKNC), 472-495 (SSLR…LAKL), 496-519 (TRLE…LANL), and 521-544 (YLHT…IFNG). Asn-470 is a glycosylation site (N-linked (GlcNAc...) asparagine). 3 N-linked (GlcNAc...) asparagine glycosylation sites follow: Asn-526, Asn-562, and Asn-578. A helical transmembrane segment spans residues 604–624 (SLIAISAAAAIVVGVIAITVL). Residues 625 to 964 (NLRVRASTVS…SGSSDELGSS (340 aa)) are Cytoplasmic-facing. Residues 678-951 (LNKDCELGRG…GEAVNILRMI (274 aa)) enclose the Protein kinase domain. ATP is bound by residues 684–692 (LGRGGFGAV) and Lys-706.

Belongs to the protein kinase superfamily. Ser/Thr protein kinase family. As to quaternary structure, interacts with IRKI. In terms of processing, autophosphorylated. Highly expressed in root tips, shoot apices and developing flowers.

The protein localises to the cell membrane. The catalysed reaction is L-seryl-[protein] + ATP = O-phospho-L-seryl-[protein] + ADP + H(+). It carries out the reaction L-threonyl-[protein] + ATP = O-phospho-L-threonyl-[protein] + ADP + H(+). This is Probable LRR receptor-like serine/threonine-protein kinase IRK from Arabidopsis thaliana (Mouse-ear cress).